The primary structure comprises 206 residues: Protein GrpE (206 aa).

Residues 1-36 form a disordered region; that stretch reads MTDSNGPKDNNQDQAQAAADPVVSKPYIMPDDPEDG.

The protein belongs to the GrpE family. In terms of assembly, homodimer.

Its subcellular location is the cytoplasm. In terms of biological role, participates actively in the response to hyperosmotic and heat shock by preventing the aggregation of stress-denatured proteins, in association with DnaK and GrpE. It is the nucleotide exchange factor for DnaK and may function as a thermosensor. Unfolded proteins bind initially to DnaJ; upon interaction with the DnaJ-bound protein, DnaK hydrolyzes its bound ATP, resulting in the formation of a stable complex. GrpE releases ADP from DnaK; ATP binding to DnaK triggers the release of the substrate protein, thus completing the reaction cycle. Several rounds of ATP-dependent interactions between DnaJ, DnaK and GrpE are required for fully efficient folding. In Rhodopseudomonas palustris (strain HaA2), this protein is Protein GrpE.